Here is a 338-residue protein sequence, read N- to C-terminus: UDP-3-O-acylglucosamine N-acyltransferase (338 aa).

Histidine 239 acts as the Proton acceptor in catalysis.

This sequence belongs to the transferase hexapeptide repeat family. LpxD subfamily. Homotrimer.

The catalysed reaction is a UDP-3-O-[(3R)-3-hydroxyacyl]-alpha-D-glucosamine + a (3R)-hydroxyacyl-[ACP] = a UDP-2-N,3-O-bis[(3R)-3-hydroxyacyl]-alpha-D-glucosamine + holo-[ACP] + H(+). The protein operates within bacterial outer membrane biogenesis; LPS lipid A biosynthesis. Catalyzes the N-acylation of UDP-3-O-acylglucosamine using 3-hydroxyacyl-ACP as the acyl donor. Is involved in the biosynthesis of lipid A, a phosphorylated glycolipid that anchors the lipopolysaccharide to the outer membrane of the cell. The chain is UDP-3-O-acylglucosamine N-acyltransferase from Xylella fastidiosa (strain 9a5c).